A 349-amino-acid chain; its full sequence is Thylakoid lumenal 29 kDa protein, chloroplastic (349 aa).

Ser155 carries the post-translational modification Phosphoserine.

It belongs to the peroxidase family.

It localises to the plastid. The protein localises to the chloroplast thylakoid lumen. The protein is Thylakoid lumenal 29 kDa protein, chloroplastic (TL29) of Arabidopsis thaliana (Mouse-ear cress).